A 334-amino-acid chain; its full sequence is Glycerol-3-phosphate dehydrogenase [NAD(P)+] (334 aa).

NADPH contacts are provided by tryptophan 13, arginine 33, and lysine 106. Sn-glycerol 3-phosphate is bound by residues lysine 106, glycine 137, and serine 139. Alanine 141 is an NADPH binding site. Lysine 192, aspartate 245, serine 255, arginine 256, and asparagine 257 together coordinate sn-glycerol 3-phosphate. The active-site Proton acceptor is lysine 192. Position 256 (arginine 256) interacts with NADPH. Positions 280 and 282 each coordinate NADPH.

Belongs to the NAD-dependent glycerol-3-phosphate dehydrogenase family.

It localises to the cytoplasm. It carries out the reaction sn-glycerol 3-phosphate + NAD(+) = dihydroxyacetone phosphate + NADH + H(+). It catalyses the reaction sn-glycerol 3-phosphate + NADP(+) = dihydroxyacetone phosphate + NADPH + H(+). It participates in membrane lipid metabolism; glycerophospholipid metabolism. Its function is as follows. Catalyzes the reduction of the glycolytic intermediate dihydroxyacetone phosphate (DHAP) to sn-glycerol 3-phosphate (G3P), the key precursor for phospholipid synthesis. The sequence is that of Glycerol-3-phosphate dehydrogenase [NAD(P)+] from Chlamydia felis (strain Fe/C-56) (Chlamydophila felis).